Reading from the N-terminus, the 159-residue chain is Growth arrest and DNA damage-inducible protein GADD45 gamma (159 aa).

Residues 43 to 86 are homodimerization; that stretch reads VYESAKVLNVDPDNVTFCVLAADEEDEGDIALQIHFTLIQAFCC.

The protein belongs to the GADD45 family. Undergoes concentration-dependent homodimerization, which is required for growth inhibititory activity and enhances interaction with PCNA. Interacts with GADD45GIP1. Interacts with PCNA.

In terms of biological role, involved in the regulation of growth and apoptosis. Mediates activation of stress-responsive MTK1/MEKK4 MAPKKK. This Bos taurus (Bovine) protein is Growth arrest and DNA damage-inducible protein GADD45 gamma (GADD45G).